The sequence spans 550 residues: MTKFVFVTGGVVSSLGKGIAAASLAAILESRGLKVTLLKLDPYINVDPGTMSPFQHGEVFVTEDGAETDLDLGHYERFVSAKMRKSNNFTTGQIYESVIRKERRGEYLGKTVQVIPHITNEIQAFIERGAAASHDGKADVALVEIGGTVGDIESLPFLEAARQMSLRMGRNRCAFVHLTLVPFIASAGELKTKPTQHSVQKLREIGISPTALLCRADRPIPDDERAKISLFANIPQDAVISVWDADSIYKIPQMLNEQGLDRLICEELRLDPKPADLSMWQKLVNAQENPEHEITIGMVGKYVDLTESYKSLIEALRHAGMHTATRVNIEYIDSEELESGHLEVLAPLDAILVPGGFGKRGTEGKIRAIQYARENKVPYLGICLGMQLAVIEFARHVAGMTDANSTEFNLETEHPVVALITEWVDREGKVEQRSAESDLGGTMRLGAQRVPVKEGTKAASIYGAEVNERHRHRYEVNNHYVPTLENAGMVISARTPTENLPEMMELPGSMHPWFVGVQFHPEFTSTPRDGHPLFKAYVEAALAGQQRKGA.

Positions 1-270 (MTKFVFVTGG…DRLICEELRL (270 aa)) are amidoligase domain. Ser13 is a CTP binding site. Residue Ser13 participates in UTP binding. ATP is bound by residues 14 to 19 (SLGKGI) and Asp71. Residues Asp71 and Glu144 each coordinate Mg(2+). CTP is bound by residues 151-153 (DIE), 191-196 (KTKPTQ), and Lys227. UTP-binding positions include 191-196 (KTKPTQ) and Lys227. The Glutamine amidotransferase type-1 domain maps to 295–547 (TIGMVGKYVD…VEAALAGQQR (253 aa)). An L-glutamine-binding site is contributed by Gly356. Cys383 functions as the Nucleophile; for glutamine hydrolysis in the catalytic mechanism. L-glutamine is bound by residues 384-387 (LGMQ), Glu407, and Arg473. Catalysis depends on residues His520 and Glu522.

This sequence belongs to the CTP synthase family. Homotetramer.

The catalysed reaction is UTP + L-glutamine + ATP + H2O = CTP + L-glutamate + ADP + phosphate + 2 H(+). It carries out the reaction L-glutamine + H2O = L-glutamate + NH4(+). The enzyme catalyses UTP + NH4(+) + ATP = CTP + ADP + phosphate + 2 H(+). The protein operates within pyrimidine metabolism; CTP biosynthesis via de novo pathway; CTP from UDP: step 2/2. With respect to regulation, allosterically activated by GTP, when glutamine is the substrate; GTP has no effect on the reaction when ammonia is the substrate. The allosteric effector GTP functions by stabilizing the protein conformation that binds the tetrahedral intermediate(s) formed during glutamine hydrolysis. Inhibited by the product CTP, via allosteric rather than competitive inhibition. Its function is as follows. Catalyzes the ATP-dependent amination of UTP to CTP with either L-glutamine or ammonia as the source of nitrogen. Regulates intracellular CTP levels through interactions with the four ribonucleotide triphosphates. In Cupriavidus pinatubonensis (strain JMP 134 / LMG 1197) (Cupriavidus necator (strain JMP 134)), this protein is CTP synthase.